The chain runs to 122 residues: Large ribosomal subunit protein uL14 (122 aa).

Belongs to the universal ribosomal protein uL14 family. In terms of assembly, part of the 50S ribosomal subunit. Forms a cluster with proteins L3 and L19. In the 70S ribosome, L14 and L19 interact and together make contacts with the 16S rRNA in bridges B5 and B8.

In terms of biological role, binds to 23S rRNA. Forms part of two intersubunit bridges in the 70S ribosome. This Finegoldia magna (strain ATCC 29328 / DSM 20472 / WAL 2508) (Peptostreptococcus magnus) protein is Large ribosomal subunit protein uL14.